The following is a 179-amino-acid chain: Large ribosomal subunit protein uL5 (179 aa).

The protein belongs to the universal ribosomal protein uL5 family. As to quaternary structure, part of the 50S ribosomal subunit; part of the 5S rRNA/L5/L18/L25 subcomplex. Contacts the 5S rRNA and the P site tRNA. Forms a bridge to the 30S subunit in the 70S ribosome.

In terms of biological role, this is one of the proteins that bind and probably mediate the attachment of the 5S RNA into the large ribosomal subunit, where it forms part of the central protuberance. In the 70S ribosome it contacts protein S13 of the 30S subunit (bridge B1b), connecting the 2 subunits; this bridge is implicated in subunit movement. Contacts the P site tRNA; the 5S rRNA and some of its associated proteins might help stabilize positioning of ribosome-bound tRNAs. The polypeptide is Large ribosomal subunit protein uL5 (Pseudomonas savastanoi pv. phaseolicola (strain 1448A / Race 6) (Pseudomonas syringae pv. phaseolicola (strain 1448A / Race 6))).